We begin with the raw amino-acid sequence, 574 residues long: Alpha-farnesene synthase (574 aa).

Mn(2+) is bound by residues D326, D330, and E478. A DDXXD motif motif is present at residues 326 to 330 (DDIYD).

Belongs to the terpene synthase family. Tpsd subfamily. The cofactor is Mn(2+).

It localises to the cytoplasm. It catalyses the reaction (2E,6E)-farnesyl diphosphate = (3E,6E)-alpha-farnesene + diphosphate. Its pathway is terpene metabolism; oleoresin biosynthesis. In terms of biological role, involved in sesquiterpene (C15) biosynthesis. The major product is alpha-farnesene. This Pinus taeda (Loblolly pine) protein is Alpha-farnesene synthase (PT5).